Reading from the N-terminus, the 360-residue chain is Phospho-N-acetylmuramoyl-pentapeptide-transferase (360 aa).

10 helical membrane passes run 26–46, 74–94, 97–117, 134–154, 168–188, 199–219, 236–256, 263–283, 288–308, and 338–358; these read AILGLLTALVFSLWFGPKLIE, MGGLLILAAIFISVLLWGDLG, YVWVMLFVLGSFGLIGFIDDY, YILQSLAALLIAFFLYATAAN, VMPQLGAVFIVLAYFTIVGAS, GLAIMPTVMVAAAFALIAYLS, SGELVIVCTAIVGAGLGFLWF, VFMGDVGSLSLGAALGTIAVL, ILLVIMGGVFVMETLSVILQV, and VIVRFWIISIFLVLLGLATLK.

The protein belongs to the glycosyltransferase 4 family. MraY subfamily. Requires Mg(2+) as cofactor.

Its subcellular location is the cell inner membrane. The catalysed reaction is UDP-N-acetyl-alpha-D-muramoyl-L-alanyl-gamma-D-glutamyl-meso-2,6-diaminopimeloyl-D-alanyl-D-alanine + di-trans,octa-cis-undecaprenyl phosphate = di-trans,octa-cis-undecaprenyl diphospho-N-acetyl-alpha-D-muramoyl-L-alanyl-D-glutamyl-meso-2,6-diaminopimeloyl-D-alanyl-D-alanine + UMP. It participates in cell wall biogenesis; peptidoglycan biosynthesis. Functionally, catalyzes the initial step of the lipid cycle reactions in the biosynthesis of the cell wall peptidoglycan: transfers peptidoglycan precursor phospho-MurNAc-pentapeptide from UDP-MurNAc-pentapeptide onto the lipid carrier undecaprenyl phosphate, yielding undecaprenyl-pyrophosphoryl-MurNAc-pentapeptide, known as lipid I. The chain is Phospho-N-acetylmuramoyl-pentapeptide-transferase from Shewanella baltica (strain OS185).